A 206-amino-acid chain; its full sequence is U-scoloptoxin(08)-Cw1a (206 aa).

A signal peptide spans 1–24; sequence MIFRVNLLFSCFCFVLFVFDFSNA. Positions 25-164 are excised as a propeptide; that stretch reads SKYDQGSLNI…DLPELKRRKR (140 aa). One copy of the RLWRNWE 1; approximate repeat lies at 37-43; it reads RLWRDWE. The stretch at 71 to 77 is one RLWRNWE 2; approximate repeat; that stretch reads RLWRDWE. One copy of the RLWRNWE 3; approximate repeat lies at 104 to 110; the sequence is RLWRDWE. Residues 137–143 form an RLWRNWE 4 repeat; the sequence is RLWRNWE. Residues 164-170 form an RLWRNWE 5; approximate repeat; it reads RLWRNED.

This sequence belongs to the scoloptoxin-08 family. Post-translationally, contains 3 disulfide bonds. Expressed by the venom gland.

It localises to the secreted. The sequence is that of U-scoloptoxin(08)-Cw1a from Cormocephalus westwoodi (Westwood's green centipede).